The following is a 142-amino-acid chain: Galactose-6-phosphate isomerase subunit LacA (142 aa).

Belongs to the LacAB/RpiB family. In terms of assembly, heteromultimeric protein consisting of LacA and LacB.

It carries out the reaction aldehydo-D-galactose 6-phosphate = keto-D-tagatose 6-phosphate. It functions in the pathway carbohydrate metabolism; D-galactose 6-phosphate degradation; D-tagatose 6-phosphate from D-galactose 6-phosphate: step 1/1. The polypeptide is Galactose-6-phosphate isomerase subunit LacA (Staphylococcus aureus).